The primary structure comprises 121 residues: Large ribosomal subunit protein uL22 (121 aa).

It belongs to the universal ribosomal protein uL22 family. As to quaternary structure, part of the 50S ribosomal subunit.

Functionally, this protein binds specifically to 23S rRNA; its binding is stimulated by other ribosomal proteins, e.g. L4, L17, and L20. It is important during the early stages of 50S assembly. It makes multiple contacts with different domains of the 23S rRNA in the assembled 50S subunit and ribosome. Its function is as follows. The globular domain of the protein is located near the polypeptide exit tunnel on the outside of the subunit, while an extended beta-hairpin is found that lines the wall of the exit tunnel in the center of the 70S ribosome. The sequence is that of Large ribosomal subunit protein uL22 from Synechococcus sp. (strain WH7803).